The chain runs to 356 residues: tRNA pseudouridine synthase D (356 aa).

The active-site Nucleophile is D84. The 144-residue stretch at 159-302 folds into the TRUD domain; it reads GVPNYYGPQR…RRGARRPIRV (144 aa).

Belongs to the pseudouridine synthase TruD family.

The catalysed reaction is uridine(13) in tRNA = pseudouridine(13) in tRNA. Its function is as follows. Responsible for synthesis of pseudouridine from uracil-13 in transfer RNAs. This is tRNA pseudouridine synthase D from Thermus thermophilus (strain ATCC 27634 / DSM 579 / HB8).